The sequence spans 103 residues: ATP synthase subunit c (103 aa).

The next 3 helical transmembrane spans lie at 3–23, 30–50, and 74–94; these read FLAL…VSGL, SIAG…IGMG, and MFIA…LALI.

This sequence belongs to the ATPase C chain family. F-type ATPases have 2 components, F(1) - the catalytic core - and F(0) - the membrane proton channel. F(1) has five subunits: alpha(3), beta(3), gamma(1), delta(1), epsilon(1). F(0) has three main subunits: a(1), b(2) and c(10-14). The alpha and beta chains form an alternating ring which encloses part of the gamma chain. F(1) is attached to F(0) by a central stalk formed by the gamma and epsilon chains, while a peripheral stalk is formed by the delta and b chains.

The protein localises to the cell inner membrane. F(1)F(0) ATP synthase produces ATP from ADP in the presence of a proton or sodium gradient. F-type ATPases consist of two structural domains, F(1) containing the extramembraneous catalytic core and F(0) containing the membrane proton channel, linked together by a central stalk and a peripheral stalk. During catalysis, ATP synthesis in the catalytic domain of F(1) is coupled via a rotary mechanism of the central stalk subunits to proton translocation. Its function is as follows. Key component of the F(0) channel; it plays a direct role in translocation across the membrane. A homomeric c-ring of between 10-14 subunits forms the central stalk rotor element with the F(1) delta and epsilon subunits. This is ATP synthase subunit c from Helicobacter hepaticus (strain ATCC 51449 / 3B1).